Here is a 416-residue protein sequence, read N- to C-terminus: Probable glucan 1,3-beta-glucosidase A (416 aa).

An N-terminal signal peptide occupies residues 1-22; the sequence is MIFKFSQKALVALYLVVGLAEA. Glutamate 211 acts as the Proton donor in catalysis. Intrachain disulfides connect cysteine 291-cysteine 415 and cysteine 316-cysteine 342. Glutamate 308 (nucleophile) is an active-site residue. Asparagine 344 carries N-linked (GlcNAc...) asparagine glycosylation.

It belongs to the glycosyl hydrolase 5 (cellulase A) family. In terms of assembly, monomer. Mn(2+) is required as a cofactor.

The protein localises to the secreted. The enzyme catalyses Successive hydrolysis of beta-D-glucose units from the non-reducing ends of (1-&gt;3)-beta-D-glucans, releasing alpha-glucose.. Functionally, beta-glucanases participate in the metabolism of beta-glucan, the main structural component of the cell wall. It could also function biosynthetically as a transglycosylase. The polypeptide is Probable glucan 1,3-beta-glucosidase A (exgA) (Aspergillus fumigatus (strain ATCC MYA-4609 / CBS 101355 / FGSC A1100 / Af293) (Neosartorya fumigata)).